A 404-amino-acid polypeptide reads, in one-letter code: Floricaula/leafy-like protein FL1 (404 aa).

The tract at residues 210–251 is disordered; the sequence is IGVPEHSSESDERKADTNKQKRRRSKEPGEDGEDRPREHPFI. 2 stretches are compositionally biased toward basic and acidic residues: residues 215–228 and 235–249; these read HSSE…DTNK and KEPG…REHP. 3 consecutive DNA-binding regions follow at residues 246–250, 315–322, and 386–389; these read REHPF, NKPKMRHY, and YVPT.

This sequence belongs to the FLO/LFY family. As to expression, expressed in both male and female cones, vegetative buds and needles, but not in the roots.

The protein resides in the nucleus. Probable transcription factor. The chain is Floricaula/leafy-like protein FL1 from Pinus radiata (Monterey pine).